Reading from the N-terminus, the 543-residue chain is Putative inorganic phosphate export protein YjbB (543 aa).

9 consecutive transmembrane segments (helical) span residues 1 to 21 (MLTL…THIV), 48 to 68 (FCAG…TMLV), 76 to 96 (LVAL…TALM), 99 to 119 (ILTF…VIFF), 134 to 154 (GIGL…VTPI), 175 to 195 (ALIG…VLLT), 196 to 216 (ATLT…VIGA), 240 to 260 (LGSL…VHLL), and 274 to 294 (LVIY…LPFV).

This sequence belongs to the YjbB family.

It is found in the cell inner membrane. It catalyses the reaction phosphate(in) = phosphate(out). Might be involved in phosphate export. Overproduction of YjbB reduces the elevated levels of polyphosphate (polyP) in a phoU mutant that accumulates 1000-fold higher levels of polyP than the wild type, suggesting that YjbB exports excess intracellular phosphate (Pi) in the phoU mutant and thus reduces the levels of polyP. In Escherichia coli (strain K12), this protein is Putative inorganic phosphate export protein YjbB (yjbB).